Reading from the N-terminus, the 97-residue chain is Na(+)/H(+) antiporter subunit F1 (97 aa).

The next 3 membrane-spanning stretches (helical) occupy residues 3–23, 35–55, and 60–80; these read FKIFIITALIIVVLSMLAMLI, VVALDAIGLQLMAVIALFSIL, and YMLVVILMVGILAFLGTAVFS.

It belongs to the CPA3 antiporters (TC 2.A.63) subunit F family. In terms of assembly, may form a heterooligomeric complex that consists of seven subunits: mnhA1, mnhB1, mnhC1, mnhD1, mnhE1, mnhF1 and mnhG1.

It localises to the cell membrane. Functionally, mnh complex is a Na(+)/H(+) antiporter involved in Na(+) excretion. The sequence is that of Na(+)/H(+) antiporter subunit F1 (mnhF1) from Staphylococcus epidermidis (strain ATCC 35984 / DSM 28319 / BCRC 17069 / CCUG 31568 / BM 3577 / RP62A).